Here is a 212-residue protein sequence, read N- to C-terminus: MEAKTLGTVTPRKPVLSVSARKIKDNAADWHNLILKWETLNDAGFTTANNIANLKISLLNKDKIELDSSSPASKENEEKVCLEYNEELEKLCEELQATLDGLTKIQVKMEKLSSTTKGICELENYHYGEESKRPPLFHTWPTTHFYEVSHKLLEMYRKELLLKRTVAKELAHTGDPDLTLSYLSMWLHQPYVESDSRLHLESMLLETGHRAL.

At M1 the chain carries N-acetylmethionine. Phosphoserine occurs at positions 69 and 73. The stretch at 73–107 (SKENEEKVCLEYNEELEKLCEELQATLDGLTKIQV) forms a coiled coil. S202 is a Na(+) binding site.

The protein belongs to the CINP family. In terms of assembly, homodimer. Part of the 55LCC heterohexameric ATPase complex composed at least of AIRIM, AFG2A, AFG2B and CINP. Interacts with AIRIM. Interacts with CDK2 and CDC7. Interacts with the components of the replication complex, MCM2, MCM3, MCM4, MCM5, MCM6, MCM7 and with ORC2-containing complexes. Interacts with ATRIP. Interacts with CEP152. Associates with pre-60S ribosomal particles. In terms of processing, phosphorylated by CDC7 but not by CDK2.

The protein resides in the nucleus. Component of the DNA replication complex, which interacts with two kinases, CDK2 and CDC7, thereby providing a functional and physical link between CDK2 and CDC7 during firing of the origins of replication. Regulates ATR-mediated checkpoint signaling in response to DNA damage. Part of the 55LCC heterohexameric ATPase complex which is chromatin-associated and promotes replisome proteostasis to maintain replication fork progression and genome stability. Required for replication fork progression, sister chromatid cohesion, and chromosome stability. The ATPase activity is specifically enhanced by replication fork DNA and is coupled to cysteine protease-dependent cleavage of replisome substrates in response to replication fork damage. Uses ATPase activity to process replisome substrates in S-phase, facilitating their proteolytic turnover from chromatin to ensure DNA replication and mitotic fidelity. As part of 55LCC complex, also involved in the cytoplasmic maturation steps of pre-60S ribosomal particles by promoting the release of shuttling protein RSL24D1/RLP24 from the pre-ribosomal particles. The sequence is that of Cyclin-dependent kinase 2-interacting protein from Homo sapiens (Human).